The sequence spans 112 residues: Protein lin-52 homolog (112 aa).

This sequence belongs to the lin-52 family. As to quaternary structure, component of the DREAM complex.

This Gallus gallus (Chicken) protein is Protein lin-52 homolog (LIN52).